We begin with the raw amino-acid sequence, 374 residues long: N-acetyldiaminopimelate deacetylase (374 aa).

D68 is a catalytic residue. E127 (proton acceptor) is an active-site residue.

Belongs to the peptidase M20A family. N-acetyldiaminopimelate deacetylase subfamily.

The enzyme catalyses N-acetyl-(2S,6S)-2,6-diaminopimelate + H2O = (2S,6S)-2,6-diaminopimelate + acetate. Its pathway is amino-acid biosynthesis; L-lysine biosynthesis via DAP pathway; LL-2,6-diaminopimelate from (S)-tetrahydrodipicolinate (acetylase route): step 3/3. Functionally, catalyzes the conversion of N-acetyl-diaminopimelate to diaminopimelate and acetate. The sequence is that of N-acetyldiaminopimelate deacetylase from Shouchella clausii (strain KSM-K16) (Alkalihalobacillus clausii).